The primary structure comprises 353 residues: uncharacterized protein (353 aa).

A signal peptide spans Met1–Ala30.

Monomer.

This is an uncharacterized protein from Escherichia coli (strain K12).